The primary structure comprises 262 residues: Inner membrane protein YcfZ (262 aa).

At Met-1–Phe-4 the chain is on the cytoplasmic side. The chain crosses the membrane as a helical span at residues Ile-5–Met-27. Residues Lys-28–Asn-182 lie on the Periplasmic side of the membrane. The helical transmembrane segment at Thr-183–Tyr-202 threads the bilayer. Topologically, residues Thr-203–Phe-206 are cytoplasmic. A helical transmembrane segment spans residues Ile-207–Tyr-229. The Periplasmic portion of the chain corresponds to Ile-230–Arg-238. The helical transmembrane segment at Ile-239–Leu-258 threads the bilayer. At Thr-259–Arg-262 the chain is on the cytoplasmic side.

The protein resides in the cell inner membrane. This Escherichia coli (strain K12) protein is Inner membrane protein YcfZ (ycfZ).